Here is a 346-residue protein sequence, read N- to C-terminus: Low specificity L-threonine aldolase (346 aa).

K207 carries the post-translational modification N6-(pyridoxal phosphate)lysine.

The protein belongs to the threonine aldolase family. Homotetramer. The cofactor is pyridoxal 5'-phosphate.

The enzyme catalyses L-threonine = acetaldehyde + glycine. The catalysed reaction is L-allo-threonine = acetaldehyde + glycine. Its function is as follows. Catalyzes the cleavage of L-allo-threonine and L-threonine to glycine and acetaldehyde. Can also act on L-erythro-phenylserine, L-threo-phenylserine, L-beta-3,4-methylenedioxyphenylserine and L-beta-3,4-dihydroxyphenylserine. This chain is Low specificity L-threonine aldolase (ltaE), found in Pseudomonas sp. (strain NCIMB 10558).